Reading from the N-terminus, the 1149-residue chain is Tape measure protein (1149 aa).

A run of 8 helical transmembrane segments spans residues 389-409 (VVIF…AGMV), 431-451 (MGTI…FMIA), 561-581 (LAFL…VSFL), 689-709 (AAVQ…PTLI), 726-746 (ALPA…QALI), 781-801 (ILMA…TAAI), 840-860 (LIAG…DFVP), and 865-885 (AGVQ…GSLL). Residues 1084–1109 (RVDLFNTGSDNPNQPQSQSKNNQGEQ) form a disordered region. Low complexity predominate over residues 1094 to 1106 (NPNQPQSQSKNNQ).

The protein resides in the host membrane. It localises to the virion. Its function is as follows. Plays a role in virion tail formation. The length of the tape measure protein is proportional to the length of the phage's tail. This chain is Tape measure protein (TMP), found in Streptococcus pneumoniae (Bacteriophage Dp-1).